A 102-amino-acid polypeptide reads, in one-letter code: Small ribosomal subunit protein uS10 (102 aa).

The protein belongs to the universal ribosomal protein uS10 family. In terms of assembly, part of the 30S ribosomal subunit.

In terms of biological role, involved in the binding of tRNA to the ribosomes. The polypeptide is Small ribosomal subunit protein uS10 (Allorhizobium ampelinum (strain ATCC BAA-846 / DSM 112012 / S4) (Agrobacterium vitis (strain S4))).